The primary structure comprises 142 residues: Probable pilin MJ0832.1 (142 aa).

A propeptide spanning residues 1–8 (MLKFRKRG) is cleaved from the precursor. A QXSXEXXXL motif is present at residues 9–17 (QISLEFSLL).

The N-terminus is cleaved by the prepilin peptidase EppA, which recognizes the class III signal sequence.

The protein resides in the secreted. It is found in the cell surface. The protein localises to the fimbrium. This is Probable pilin MJ0832.1 from Methanocaldococcus jannaschii (strain ATCC 43067 / DSM 2661 / JAL-1 / JCM 10045 / NBRC 100440) (Methanococcus jannaschii).